We begin with the raw amino-acid sequence, 209 residues long: Orotate phosphoribosyltransferase (209 aa).

5-phospho-alpha-D-ribose 1-diphosphate contacts are provided by residues R96, K100, H102, and 122–130; that span reads EDLISTGGS. S126 is an orotate binding site.

This sequence belongs to the purine/pyrimidine phosphoribosyltransferase family. PyrE subfamily. Homodimer. Mg(2+) serves as cofactor.

It carries out the reaction orotidine 5'-phosphate + diphosphate = orotate + 5-phospho-alpha-D-ribose 1-diphosphate. It participates in pyrimidine metabolism; UMP biosynthesis via de novo pathway; UMP from orotate: step 1/2. Its function is as follows. Catalyzes the transfer of a ribosyl phosphate group from 5-phosphoribose 1-diphosphate to orotate, leading to the formation of orotidine monophosphate (OMP). This is Orotate phosphoribosyltransferase from Listeria innocua serovar 6a (strain ATCC BAA-680 / CLIP 11262).